Reading from the N-terminus, the 259-residue chain is Tryptophan synthase alpha chain (259 aa).

Catalysis depends on proton acceptor residues Glu-35 and Asp-46.

Belongs to the TrpA family. Tetramer of two alpha and two beta chains.

It carries out the reaction (1S,2R)-1-C-(indol-3-yl)glycerol 3-phosphate + L-serine = D-glyceraldehyde 3-phosphate + L-tryptophan + H2O. Its pathway is amino-acid biosynthesis; L-tryptophan biosynthesis; L-tryptophan from chorismate: step 5/5. Functionally, the alpha subunit is responsible for the aldol cleavage of indoleglycerol phosphate to indole and glyceraldehyde 3-phosphate. The sequence is that of Tryptophan synthase alpha chain from Methanococcus maripaludis (strain C7 / ATCC BAA-1331).